Consider the following 745-residue polypeptide: Elongation factor G, mitochondrial (745 aa).

The tr-type G domain maps to 40–317; sequence ERIRNIGISA…AVLDYLPNPG (278 aa). GTP-binding positions include 49-56, 116-120, and 170-173; these read AHIDSGKT, DTPGH, and NKLD.

The protein belongs to the TRAFAC class translation factor GTPase superfamily. Classic translation factor GTPase family. EF-G/EF-2 subfamily.

The protein localises to the mitochondrion. Its pathway is protein biosynthesis; polypeptide chain elongation. Functionally, mitochondrial GTPase that catalyzes the GTP-dependent ribosomal translocation step during translation elongation. During this step, the ribosome changes from the pre-translocational (PRE) to the post-translocational (POST) state as the newly formed A-site-bound peptidyl-tRNA and P-site-bound deacylated tRNA move to the P and E sites, respectively. Catalyzes the coordinated movement of the two tRNA molecules, the mRNA and conformational changes in the ribosome. Essential during development as it acts as a retrograde signal from mitochondria to the nucleus to slow down cell proliferation if mitochondrial energy output is low. This chain is Elongation factor G, mitochondrial, found in Drosophila yakuba (Fruit fly).